A 274-amino-acid polypeptide reads, in one-letter code: Leucine-rich repeat-containing protein 10 (274 aa).

LRR repeat units lie at residues 30–51 (LDRM…VCSF), 52–74 (TELV…LAQL), 76–97 (NLQI…VCTL), 98–120 (KQLC…LSLL), 121–143 (QNLR…VCEL), 145–166 (LLKT…LRRL), 167–189 (RELR…LLRM), and 191–213 (FLEV…HLTN). The tract at residues 236–274 (RVGRWAEETPEPDPRKARRYALAKEENQEPPPPLLPSSS) is disordered. Residues 239-250 (RWAEETPEPDPR) are compositionally biased toward basic and acidic residues. Residues 264 to 274 (EPPPPLLPSSS) show a composition bias toward pro residues.

Detected specifically in the heart.

It localises to the nucleus. May play important roles in cardiac development and/or cardiac function. This chain is Leucine-rich repeat-containing protein 10 (Lrrc10), found in Mus musculus (Mouse).